A 623-amino-acid chain; its full sequence is Phosphoenolpyruvate carboxykinase [GTP] (623 aa).

Substrate is bound by residues Arg-86 and 220-222 (YGG). The Mn(2+) site is built by Lys-229 and His-248. Ser-270 lines the substrate pocket. GTP is bound at residue 271–276 (MCGKTS). Residue Cys-272 is part of the active site. Asp-289 serves as a coordination point for Mn(2+). 384 to 386 (NAR) is a binding site for substrate. Residues Arg-386 and Arg-418 each contribute to the GTP site.

It belongs to the phosphoenolpyruvate carboxykinase [GTP] family. As to quaternary structure, homotetramer. Mn(2+) serves as cofactor.

It localises to the cytoplasm. It catalyses the reaction oxaloacetate + GTP = phosphoenolpyruvate + GDP + CO2. The protein operates within carbohydrate biosynthesis; gluconeogenesis. Functionally, involved in the gluconeogenesis. Catalyzes the conversion of oxaloacetate (OAA) to phosphoenolpyruvate (PEP), the rate-limiting step in the metabolic pathway that produces glucose from lactate and other precursors derived from the citric acid cycle. This Thermococcus kodakarensis (strain ATCC BAA-918 / JCM 12380 / KOD1) (Pyrococcus kodakaraensis (strain KOD1)) protein is Phosphoenolpyruvate carboxykinase [GTP] (pckG).